We begin with the raw amino-acid sequence, 406 residues long: B3 domain-containing protein Os11g0197600 (406 aa).

Positions 1–20 (MVVREKQGGRMGKGKGKGKE) are disordered. Residues 30–123 (RSFFRVLLTL…QFSVTVFEPS (94 aa)) constitute a DNA-binding region (TF-B3 1). The interval 199–245 (ESSRRKRAGASAGKSKVTSTSHNSTRGSSCSSDEDNSSSKSPNPPFL) is disordered. The segment covering 214 to 225 (KVTSTSHNSTRG) has biased composition (polar residues). Residues 298-393 (AVQIMMESYV…NIKVHIYRVV (96 aa)) constitute a DNA-binding region (TF-B3 2).

Its subcellular location is the nucleus. This chain is B3 domain-containing protein Os11g0197600, found in Oryza sativa subsp. japonica (Rice).